Here is a 623-residue protein sequence, read N- to C-terminus: Chaperone protein HtpG (623 aa).

The segment at 1 to 341 is a; substrate-binding; sequence MEKREFKAES…SQDLSLNISR (341 aa). Residues 342 to 549 form a b region; that stretch reads EMLQHDRQLS…EGEVSIEMEK (208 aa). Residues 550–623 are c; it reads ILSAMPNNQG…FTNDICKLMK (74 aa).

It belongs to the heat shock protein 90 family. As to quaternary structure, homodimer.

The protein resides in the cytoplasm. Molecular chaperone. Has ATPase activity. This Clostridium perfringens (strain ATCC 13124 / DSM 756 / JCM 1290 / NCIMB 6125 / NCTC 8237 / Type A) protein is Chaperone protein HtpG.